Reading from the N-terminus, the 349-residue chain is E3 ubiquitin-protein ligase rnf146 (349 aa).

The segment at 1 to 21 (MASCGEVDHSVSSLPSSKKGS) is disordered. Positions 10-21 (SVSSLPSSKKGS) are enriched in low complexity. The segment at 41-79 (CAICLQSCVHPVQLPCRHVFCFLCVKGASWQSKRCALCR) adopts an RING-type zinc-finger fold. Residues 97–173 (ELKTGGRGAT…EHGRRRKIKR (77 aa)) enclose the WWE domain. Tyrosine 113, arginine 116, tryptophan 120, tyrosine 150, glutamine 159, arginine 169, and lysine 181 together coordinate a glycoprotein. 2 disordered regions span residues 226–251 (TTVL…SPSL) and 264–349 (DAPE…CTEV). The segment covering 283–292 (SMSSSPNTYA) has biased composition (polar residues). Positions 298 to 307 (WSDDEGDGEA) are enriched in acidic residues. The segment covering 308–317 (VEPREQRLRL) has biased composition (basic and acidic residues).

The protein resides in the cytoplasm. Its subcellular location is the cytosol. It is found in the nucleus. It catalyses the reaction S-ubiquitinyl-[E2 ubiquitin-conjugating enzyme]-L-cysteine + [acceptor protein]-L-lysine = [E2 ubiquitin-conjugating enzyme]-L-cysteine + N(6)-ubiquitinyl-[acceptor protein]-L-lysine.. It participates in protein modification; protein ubiquitination. E3 ubiquitin-protein ligase that specifically binds poly-ADP-ribosylated proteins and mediates their ubiquitination and subsequent degradation. May regulate many important biological processes, such as cell survival and DNA damage response. Acts as an activator of the Wnt signaling pathway by mediating the ubiquitination of poly-ADP-ribosylated proteins. Neuroprotective protein. Protects against cell death induced by DNA damaging agents and rescues cells from G1 arrest. Promotes cell survival after gamma-irradiation. Facilitates DNA repair. The sequence is that of E3 ubiquitin-protein ligase rnf146 (rnf146) from Salmo salar (Atlantic salmon).